An 83-amino-acid chain; its full sequence is Short neurotoxin 3FTx-Oxy4 (83 aa).

The signal sequence occupies residues 1–21; that stretch reads MKTLLLTLVVVTIVCLDLGYT. 4 cysteine pairs are disulfide-bonded: Cys24-Cys45, Cys38-Cys62, Cys64-Cys75, and Cys76-Cys81.

Belongs to the three-finger toxin family. Short-chain subfamily. Type I alpha-neurotoxin sub-subfamily. Expressed by the venom gland.

It localises to the secreted. Functionally, binds to muscle nicotinic acetylcholine receptor (nAChR) and inhibit acetylcholine from binding to the receptor, thereby impairing neuromuscular transmission. In Oxyuranus microlepidotus (Inland taipan), this protein is Short neurotoxin 3FTx-Oxy4.